Reading from the N-terminus, the 540-residue chain is Chaperonin GroEL 2 (540 aa).

ATP is bound by residues 29–32, 86–90, glycine 413, and aspartate 492; these read TLGP and DGTTT. The interval 521–540 is disordered; that stretch reads KPEKEKASVPGGGDMGGMDF. A compositionally biased stretch (gly residues) spans 530–540; that stretch reads PGGGDMGGMDF.

This sequence belongs to the chaperonin (HSP60) family. As to quaternary structure, forms a cylinder of 14 subunits composed of two heptameric rings stacked back-to-back. Interacts with the co-chaperonin GroES.

It localises to the secreted. The protein localises to the capsule. It is found in the cell surface. Its subcellular location is the cell wall. The catalysed reaction is ATP + H2O + a folded polypeptide = ADP + phosphate + an unfolded polypeptide.. Together with its co-chaperonin GroES, plays an essential role in assisting protein folding. The GroEL-GroES system forms a nano-cage that allows encapsulation of the non-native substrate proteins and provides a physical environment optimized to promote and accelerate protein folding. The protein is Chaperonin GroEL 2 of Mycobacterium tuberculosis (strain ATCC 25177 / H37Ra).